Consider the following 189-residue polypeptide: GMP synthase [glutamine-hydrolyzing] subunit A (189 aa).

The region spanning 1 to 189 (MIVILNNGGQ…CKKCGFGFEE (189 aa)) is the Glutamine amidotransferase type-1 domain. The Nucleophile role is filled by Cys-76. Residues His-163 and Glu-165 contribute to the active site.

As to quaternary structure, heterodimer composed of a glutamine amidotransferase subunit (A) and a GMP-binding subunit (B).

The enzyme catalyses XMP + L-glutamine + ATP + H2O = GMP + L-glutamate + AMP + diphosphate + 2 H(+). Its pathway is purine metabolism; GMP biosynthesis; GMP from XMP (L-Gln route): step 1/1. In terms of biological role, catalyzes the synthesis of GMP from XMP. This is GMP synthase [glutamine-hydrolyzing] subunit A from Methanococcus maripaludis (strain DSM 14266 / JCM 13030 / NBRC 101832 / S2 / LL).